The primary structure comprises 459 residues: MKETIVHMGFDDIDTPFGGCTTHFVASILVKWVKDRRIKLIDYPNLIRLNPGVPWKTRGNGAVVLRFKVKNYDEAIKLLEEAYDEALEYLGKYHHPQHHPVIGMYIGGLSERIKWIGWKAVHDLIPLDLMHRVLEKEKNKIIYKLLRKDKKRGLIGVFSAIGYRMTNTDYTYELIAYRSEEYIDKPRQVNAESVKYMDKVFHNDTILNYDYETNRPLITPHGGDPVLLGIRGEYPDVLIKAYNMVKINEPVPIRLIYRTNQHTDAHLRRINNLGEAFIYRGVRVRVWVASIPKRIMGGHVIFKVTDGRRFIDVAAYEPTGKLRRIAEKLRPGDEVEVMGIVRPQSSKHGPTINLEKLHIIMVKPLIKLENPRCPRCGARMKSAGRGKGYKCPKCGYRDPNAKKIVRVIKRDLEPGWYEPSPRAFKHLMKPLKRFGKEKNHYPEEIEPSNFIWYNNMLLK.

The OB DNA-binding region spans valine 282–isoleucine 360.

The protein belongs to the TiaS family.

The protein localises to the cytoplasm. The catalysed reaction is cytidine(34) in tRNA(Ile2) + agmatine + ATP + H2O = 2-agmatinylcytidine(34) in tRNA(Ile2) + AMP + 2 phosphate + 2 H(+). Its function is as follows. ATP-dependent agmatine transferase that catalyzes the formation of 2-agmatinylcytidine (agm2C) at the wobble position (C34) of tRNA(Ile2), converting the codon specificity from AUG to AUA. The chain is tRNA(Ile2) 2-agmatinylcytidine synthetase TiaS from Staphylothermus marinus (strain ATCC 43588 / DSM 3639 / JCM 9404 / F1).